The following is a 152-amino-acid chain: Protein SprT-like (152 aa).

The SprT-like domain maps to 7–147 (QRLVEEVSLQ…CGKCKGKLKP (141 aa)). Histidine 67 provides a ligand contact to Zn(2+). Residue glutamate 68 is part of the active site. A Zn(2+)-binding site is contributed by histidine 71.

Belongs to the SprT family. The cofactor is Zn(2+).

The protein resides in the cytoplasm. The chain is Protein SprT-like from Bacillus cereus (strain ATCC 14579 / DSM 31 / CCUG 7414 / JCM 2152 / NBRC 15305 / NCIMB 9373 / NCTC 2599 / NRRL B-3711).